A 359-amino-acid chain; its full sequence is Photosystem II protein D1 1 (359 aa).

A run of 3 helical transmembrane segments spans residues 29 to 46 (YVGW…AATI), 118 to 133 (HFLI…EWEL), and 142 to 156 (WICV…AASA). A chlorophyll a-binding site is contributed by H118. Y126 contributes to the pheophytin a binding site. [CaMn4O5] cluster-binding residues include D170 and E189. Residues 197 to 218 (FHMLGVAGVFGGSLFSAMHGSL) traverse the membrane as a helical segment. Residue H198 coordinates chlorophyll a. Residues H215 and 264 to 265 (SF) contribute to the a quinone site. Fe cation is bound at residue H215. H272 is a binding site for Fe cation. The helical transmembrane segment at 274–288 (FLAAWPVVGIWFTAL) threads the bilayer. [CaMn4O5] cluster is bound by residues H332, E333, D342, and A344. Positions 345 to 359 (AAESTPVALQAPAIG) are excised as a propeptide.

It belongs to the reaction center PufL/M/PsbA/D family. In terms of assembly, PSII is composed of 1 copy each of membrane proteins PsbA, PsbB, PsbC, PsbD, PsbE, PsbF, PsbH, PsbI, PsbJ, PsbK, PsbL, PsbM, PsbT, PsbX, PsbY, PsbZ, Psb30/Ycf12, peripheral proteins PsbO, CyanoQ (PsbQ), PsbU, PsbV and a large number of cofactors. It forms dimeric complexes. The cofactor is The D1/D2 heterodimer binds P680, chlorophylls that are the primary electron donor of PSII, and subsequent electron acceptors. It shares a non-heme iron and each subunit binds pheophytin, quinone, additional chlorophylls, carotenoids and lipids. D1 provides most of the ligands for the Mn4-Ca-O5 cluster of the oxygen-evolving complex (OEC). There is also a Cl(-1) ion associated with D1 and D2, which is required for oxygen evolution. The PSII complex binds additional chlorophylls, carotenoids and specific lipids.. Post-translationally, tyr-161 forms a radical intermediate that is referred to as redox-active TyrZ, YZ or Y-Z. In terms of processing, C-terminally processed by CtpA; processing is essential to allow assembly of the oxygen-evolving complex and thus photosynthetic growth.

The protein resides in the cellular thylakoid membrane. It carries out the reaction 2 a plastoquinone + 4 hnu + 2 H2O = 2 a plastoquinol + O2. Functionally, photosystem II (PSII) is a light-driven water:plastoquinone oxidoreductase that uses light energy to abstract electrons from H(2)O, generating O(2) and a proton gradient subsequently used for ATP formation. It consists of a core antenna complex that captures photons, and an electron transfer chain that converts photonic excitation into a charge separation. The D1/D2 (PsbA/PsbD) reaction center heterodimer binds P680, the primary electron donor of PSII as well as several subsequent electron acceptors. The chain is Photosystem II protein D1 1 from Parasynechococcus marenigrum (strain WH8102).